A 1315-amino-acid chain; its full sequence is DNA-directed RNA polymerase subunit beta' (1315 aa).

Zn(2+) contacts are provided by cysteine 60, cysteine 62, cysteine 75, and cysteine 78. Mg(2+)-binding residues include aspartate 535, aspartate 537, and aspartate 539. 4 residues coordinate Zn(2+): cysteine 890, cysteine 967, cysteine 974, and cysteine 977.

It belongs to the RNA polymerase beta' chain family. The RNAP catalytic core consists of 2 alpha, 1 beta, 1 beta' and 1 omega subunit. When a sigma factor is associated with the core the holoenzyme is formed, which can initiate transcription. Mg(2+) serves as cofactor. The cofactor is Zn(2+).

The enzyme catalyses RNA(n) + a ribonucleoside 5'-triphosphate = RNA(n+1) + diphosphate. In terms of biological role, DNA-dependent RNA polymerase catalyzes the transcription of DNA into RNA using the four ribonucleoside triphosphates as substrates. The chain is DNA-directed RNA polymerase subunit beta' from Mycobacterium sp. (strain MCS).